The following is a 278-amino-acid chain: NAD kinase (278 aa).

Aspartate 56 acts as the Proton acceptor in catalysis. NAD(+) contacts are provided by residues 56–57 (DG), 132–133 (NE), arginine 158, aspartate 160, and 171–176 (TAYNKS).

The protein belongs to the NAD kinase family. It depends on a divalent metal cation as a cofactor.

The protein localises to the cytoplasm. The catalysed reaction is NAD(+) + ATP = ADP + NADP(+) + H(+). Involved in the regulation of the intracellular balance of NAD and NADP, and is a key enzyme in the biosynthesis of NADP. Catalyzes specifically the phosphorylation on 2'-hydroxyl of the adenosine moiety of NAD to yield NADP. The protein is NAD kinase of Streptococcus pyogenes serotype M1.